The sequence spans 582 residues: PX domain-containing protein kinase-like protein (582 aa).

One can recognise a PX domain in the interval 14–126; sequence LDDTVPLTAA…KFLDPNNYSA (113 aa). The 394-residue stretch at 88–481 folds into the Protein kinase domain; that stretch reads FIAERQRGLQ…VENSEEQPVK (394 aa). Residues 433–550 form a disordered region; that stretch reads EQKQIHQHRR…APFLPQPVNG (118 aa). 2 stretches are compositionally biased toward basic residues: residues 437–448 and 457–469; these read IHQHRRLTRAQS and KRRKILARKKSKR. The segment covering 483-514 has biased composition (low complexity); the sequence is SNSNNSAGSGASSPLTSPSSPTPPSTAGLSSA. Over residues 515 to 531 the composition is skewed to pro residues; sequence LPPPPPPPPPPPPPAGP. In terms of domain architecture, WH2 spans 548–567; the sequence is VNGVNRGALLSSIQNFQKGT.

It belongs to the protein kinase superfamily. Isoform 1 is present in all tissues examined. Isoform 2 is found in all tissues except skeletal muscle and very low levels in spleen. Both isoforms are widely expressed throughout the nervous system however levels of isoform 2 are higher in purified hippocampal and cortical neurons whereas glial cells express more isoform 1 than isoform 2.

It is found in the cytoplasm. Its subcellular location is the cell membrane. Binds to and modulates brain Na,K-ATPase subunits ATP1B1 and ATP1B3 and may thereby participate in the regulation of electrical excitability and synaptic transmission. May not display kinase activity. In Mus musculus (Mouse), this protein is PX domain-containing protein kinase-like protein.